The primary structure comprises 517 residues: Ribonuclease Y (517 aa).

Residues 2-22 (EILVYIIIGIAIFILSLLVGI) traverse the membrane as a helical segment. The KH domain maps to 207–267 (TTSTVALPTD…LRREIAKRTL (61 aa)). The 94-residue stretch at 333–426 (VLEHSIEVAQ…VAASDALSAS (94 aa)) folds into the HD domain.

It belongs to the RNase Y family.

The protein localises to the cell membrane. Functionally, endoribonuclease that initiates mRNA decay. The sequence is that of Ribonuclease Y from Petrotoga mobilis (strain DSM 10674 / SJ95).